Consider the following 119-residue polypeptide: Ribonuclease P protein component (119 aa).

This sequence belongs to the RnpA family. In terms of assembly, consists of a catalytic RNA component (M1 or rnpB) and a protein subunit.

It carries out the reaction Endonucleolytic cleavage of RNA, removing 5'-extranucleotides from tRNA precursor.. RNaseP catalyzes the removal of the 5'-leader sequence from pre-tRNA to produce the mature 5'-terminus. It can also cleave other RNA substrates such as 4.5S RNA. The protein component plays an auxiliary but essential role in vivo by binding to the 5'-leader sequence and broadening the substrate specificity of the ribozyme. The polypeptide is Ribonuclease P protein component (Listeria monocytogenes serotype 4b (strain CLIP80459)).